Reading from the N-terminus, the 663-residue chain is Endopolyphosphatase (663 aa).

Residues 1–14 lie on the Cytoplasmic side of the membrane; it reads MAVNEKDVGRKSRV. A helical; Signal-anchor for type II membrane protein transmembrane segment spans residues 15–35; it reads SVVLWVFIALGTLFLCKNAFT. Residues 36–663 are Vacuolar-facing; sequence FSSESIHGLK…ISTGYEDERN (628 aa). 2 N-linked (GlcNAc...) asparagine glycosylation sites follow: N487 and N526. The tract at residues 534-564 is disordered; it reads SAEQNKKKKKKNGKPDKSIPRKKPDELPAGP. A compositionally biased stretch (basic and acidic residues) spans 546–559; it reads GKPDKSIPRKKPDE.

This sequence belongs to the endopolyphosphatase PPN1 family. A divalent metal cation serves as cofactor. Post-translationally, processing by proteases in the vacuole may be required for activation.

It localises to the vacuole membrane. It carries out the reaction [phosphate](n+1) + n H2O = (n+1) phosphate + n H(+). In terms of biological role, catalyzes the hydrolysis of inorganic polyphosphate (polyP) chains of many hundreds of phosphate residues into shorter lengths. The sequence is that of Endopolyphosphatase (PPN1) from Candida glabrata (strain ATCC 2001 / BCRC 20586 / JCM 3761 / NBRC 0622 / NRRL Y-65 / CBS 138) (Yeast).